Reading from the N-terminus, the 237-residue chain is UPF0502 protein RB6530 (237 aa).

A compositionally biased stretch (polar residues) spans 187-202; sequence ASSAAPSQAESGSTSP. The disordered stretch occupies residues 187-211; that stretch reads ASSAAPSQAESGSTSPAKAANDDRI.

This sequence belongs to the UPF0502 family.

This is UPF0502 protein RB6530 from Rhodopirellula baltica (strain DSM 10527 / NCIMB 13988 / SH1).